The chain runs to 290 residues: Glycine--tRNA ligase alpha subunit (290 aa).

Belongs to the class-II aminoacyl-tRNA synthetase family. In terms of assembly, tetramer of two alpha and two beta subunits.

It localises to the cytoplasm. The enzyme catalyses tRNA(Gly) + glycine + ATP = glycyl-tRNA(Gly) + AMP + diphosphate. The chain is Glycine--tRNA ligase alpha subunit from Gloeobacter violaceus (strain ATCC 29082 / PCC 7421).